A 47-amino-acid chain; its full sequence is Sperm protamine P1 (47 aa).

It belongs to the protamine P1 family. As to expression, testis.

Its subcellular location is the nucleus. It is found in the chromosome. Functionally, protamines substitute for histones in the chromatin of sperm during the haploid phase of spermatogenesis. They compact sperm DNA into a highly condensed, stable and inactive complex. This chain is Sperm protamine P1 (PRM1), found in Orcinus orca (Killer whale).